We begin with the raw amino-acid sequence, 417 residues long: Monooxygenase cfoF (417 aa).

FAD-binding positions include 45–48, arginine 126, and aspartate 327; that span reads DRDK. Residues 389 to 399 show a composition bias toward basic and acidic residues; that stretch reads AHTTQLDRDQF. Residues 389–417 form a disordered region; the sequence is AHTTQLDRDQFTDGSGANDFLVGQQHSDK.

It belongs to the aromatic-ring hydroxylase family. KMO subfamily. FAD is required as a cofactor.

The protein operates within secondary metabolite biosynthesis; flavonoid biosynthesis. Monooxygenase; part of the gene cluster that mediates the biosynthesis of chlorflavonin, a fungal flavonoid with acetolactate synthase inhibitory activity. Within the pathway, cfoF is responsible for the hydroxylation of the flavonoid skeleton at position C3. The pathway begins with the PKS-NRPS hybrid synthetase cfoA that uses benzoic acid or p-hydroxybenzoic acid as a starter unit with four rounds of chain elongation using malonyl-CoA to form the chalcone skeleton. Then, a new type of chalcone isomerase, cfoK, catalyzes the conversion of the chalcone into a flavanone by a histidine-mediated oxa-Michael addition mechanism. The desaturation of flavanone to flavone is catalyzed by a new type of flavone synthase, the flavin mononucleotide (FMN)-dependent oxidoreductase cfoJ. Monooxygenases cfoF, cfoG, and P450 cfoH are responsible for the hydroxylation of the flavonoid skeleton at sites C3, C8, and C2', respectively. Like cfoF, the dehydratase cfoI plays also a role in the hydroxylation of position C3. Methyltransferases cfoB, cfoC, and cfoD then catalyze the methylation of C7-OH, C8-OH, and C3-OH, respectively. Finally, the monooxygenase cfoE is responsible for the chlorination of flavonoid at position C3'. This is Monooxygenase cfoF from Aspergillus candidus.